Consider the following 332-residue polypeptide: Succinylglutamate desuccinylase (332 aa).

3 residues coordinate Zn(2+): His59, Glu62, and His151. Glu215 is a catalytic residue.

The protein belongs to the AspA/AstE family. Succinylglutamate desuccinylase subfamily. Requires Zn(2+) as cofactor.

The catalysed reaction is N-succinyl-L-glutamate + H2O = L-glutamate + succinate. It functions in the pathway amino-acid degradation; L-arginine degradation via AST pathway; L-glutamate and succinate from L-arginine: step 5/5. In terms of biological role, transforms N(2)-succinylglutamate into succinate and glutamate. This chain is Succinylglutamate desuccinylase, found in Pseudomonas paraeruginosa (strain DSM 24068 / PA7) (Pseudomonas aeruginosa (strain PA7)).